A 279-amino-acid polypeptide reads, in one-letter code: Nitrate import permease protein NrtB (279 aa).

The next 5 membrane-spanning stretches (helical) occupy residues 25-45, 91-111, 149-169, 200-220, and 249-269; these read FLPY…ISAI, VAIG…VLGM, AIFV…AVGI, VPYV…AIVA, and IILA…LVAW. An ABC transmembrane type-1 domain is found at 84–267; that stretch reads ILISLQRVAI…LVGLSLDRLV (184 aa).

The protein belongs to the binding-protein-dependent transport system permease family. CysTW subfamily. The complex is composed of two ATP-binding proteins (NrtC and NrtD), two transmembrane proteins (NrtB) and a solute-binding protein (NrtA).

It is found in the cell inner membrane. Functionally, part of the ABC transporter complex NrtABCD involved in nitrate uptake. The complex is probably also involved in nitrite transport. Probably responsible for the translocation of the substrate across the membrane. In Synechococcus elongatus (strain ATCC 33912 / PCC 7942 / FACHB-805) (Anacystis nidulans R2), this protein is Nitrate import permease protein NrtB.